The chain runs to 176 residues: 3-hydroxydecanoyl-[acyl-carrier-protein] dehydratase (176 aa).

The active site involves His-75.

This sequence belongs to the thioester dehydratase family. FabA subfamily. Homodimer.

The protein localises to the cytoplasm. It catalyses the reaction a (3R)-hydroxyacyl-[ACP] = a (2E)-enoyl-[ACP] + H2O. It carries out the reaction (3R)-hydroxydecanoyl-[ACP] = (2E)-decenoyl-[ACP] + H2O. The catalysed reaction is (2E)-decenoyl-[ACP] = (3Z)-decenoyl-[ACP]. It functions in the pathway lipid metabolism; fatty acid biosynthesis. Its function is as follows. Necessary for the introduction of cis unsaturation into fatty acids. Catalyzes the dehydration of (3R)-3-hydroxydecanoyl-ACP to E-(2)-decenoyl-ACP and then its isomerization to Z-(3)-decenoyl-ACP. Can catalyze the dehydratase reaction for beta-hydroxyacyl-ACPs with saturated chain lengths up to 16:0, being most active on intermediate chain length. In Haemophilus ducreyi (strain 35000HP / ATCC 700724), this protein is 3-hydroxydecanoyl-[acyl-carrier-protein] dehydratase.